The primary structure comprises 263 residues: Regulatory protein RecX (263 aa).

Belongs to the RecX family.

The protein resides in the cytoplasm. Modulates RecA activity. This is Regulatory protein RecX from Bacillus pumilus (strain SAFR-032).